We begin with the raw amino-acid sequence, 138 residues long: Large ribosomal subunit protein bL17 (138 aa).

It belongs to the bacterial ribosomal protein bL17 family. As to quaternary structure, part of the 50S ribosomal subunit. Contacts protein L32.

This chain is Large ribosomal subunit protein bL17, found in Nitrobacter winogradskyi (strain ATCC 25391 / DSM 10237 / CIP 104748 / NCIMB 11846 / Nb-255).